Consider the following 433-residue polypeptide: Malate synthase (433 aa).

Position 16-17 (16-17 (TS)) interacts with acetyl-CoA. Asp-52 lines the Mg(2+) pocket. Arg-84 serves as a coordination point for acetyl-CoA. Glyoxylate is bound by residues Arg-84, Glu-158, and 191-192 (VD). Mg(2+)-binding residues include Glu-158 and Asp-192. Acetyl-CoA-binding residues include Arg-236 and Leu-259. Asp-388 (proton acceptor) is an active-site residue.

This sequence belongs to the HpcH/HpaI aldolase family. Homotrimer and homohexamer in equilibrium. Mg(2+) is required as a cofactor.

It is found in the cytoplasm. It carries out the reaction glyoxylate + acetyl-CoA + H2O = (S)-malate + CoA + H(+). It functions in the pathway carbohydrate metabolism; glyoxylate cycle; (S)-malate from isocitrate: step 2/2. Its function is as follows. Involved in the glyoxylate cycle which synthesizes precursors for carbohydrates from C2 compounds such as acetate. Catalyzes the Claisen condensation between acetyl-coenzyme A (acetyl-CoA) and glyoxylate to form the malyl-CoA intermediate that is subsequently hydrolyzed to produce malate and CoA. This Haloferax volcanii (strain ATCC 29605 / DSM 3757 / JCM 8879 / NBRC 14742 / NCIMB 2012 / VKM B-1768 / DS2) (Halobacterium volcanii) protein is Malate synthase (aceB).